The chain runs to 97 residues: MAGASDRTGVRRPRKAKKDPNAPKRALSSYMFFAKEKRVEIIAENPEIAKDVAAIGKMIGAAWNALSDEEKKPYERMSDEDRVRYEREKAEYAQRKV.

The disordered stretch occupies residues 1–24 (MAGASDRTGVRRPRKAKKDPNAPK). Positions 23–93 (PKRALSSYMF…RYEREKAEYA (71 aa)) form a DNA-binding region, HMG box.

Its subcellular location is the nucleus. The protein is High mobility group protein homolog NHP1 of Babesia bovis.